The following is a 313-amino-acid chain: MKIGIVGCGFVGATAAYAMVMRGVGRKLVMVDVNRARARAEAADISHAVPFAHALEVIAGEYEELEGASVVLVAAGVGQKPGETRLQLLERNAAIFKEVIPQVLRHAGDAVLLVASNPVDVLTHLAASIAGELGIPSSRVVGSGTTLDTARFRSLLSSSLGIDPRHVHAYVLGEHGDSEVLGWSTVTVGGMPLDAFAHRKGASFPPGLIASIDHQVRHAAYEIISGKQATYYGIGSALANIVEVMVYDRRSILTVCTPLPEVEGVENVTIALPHLVGGRGVLETFPPALDHMEREALRNSARIVRNAIESINV.

Residues V11, D32, R37, Y62, and 76 to 77 (GV) contribute to the NAD(+) site. Residues Q79, R85, and 117–120 (NPVD) each bind substrate. Residues 115–117 (ASN) and S143 contribute to the NAD(+) site. Residue 148-151 (DTAR) coordinates substrate. 2 residues coordinate beta-D-fructose 1,6-bisphosphate: R153 and H168. H175 serves as the catalytic Proton acceptor. Y221 bears the Phosphotyrosine mark. Residue T230 coordinates substrate.

Belongs to the LDH/MDH superfamily. LDH family. As to quaternary structure, homotetramer.

The protein resides in the cytoplasm. The enzyme catalyses (S)-lactate + NAD(+) = pyruvate + NADH + H(+). It functions in the pathway fermentation; pyruvate fermentation to lactate; (S)-lactate from pyruvate: step 1/1. Allosterically activated by fructose 1,6-bisphosphate (FBP). Catalyzes the conversion of lactate to pyruvate. The polypeptide is L-lactate dehydrogenase (Geotalea daltonii (strain DSM 22248 / JCM 15807 / FRC-32) (Geobacter daltonii)).